The primary structure comprises 372 residues: Queuine tRNA-ribosyltransferase (372 aa).

Asp-89 (proton acceptor) is an active-site residue. Substrate-binding positions include 89-93 (DSGGF), Asp-161, and Gly-232. The tract at residues 262–268 (GIGDLPS) is RNA binding. Asp-281 (nucleophile) is an active-site residue. The tract at residues 286-290 (TKAAR) is RNA binding; important for wobble base 34 recognition. Cys-319, Cys-321, Cys-324, and His-351 together coordinate Zn(2+).

Belongs to the queuine tRNA-ribosyltransferase family. As to quaternary structure, homodimer. Within each dimer, one monomer is responsible for RNA recognition and catalysis, while the other monomer binds to the replacement base PreQ1. Requires Zn(2+) as cofactor.

The catalysed reaction is 7-aminomethyl-7-carbaguanine + guanosine(34) in tRNA = 7-aminomethyl-7-carbaguanosine(34) in tRNA + guanine. The protein operates within tRNA modification; tRNA-queuosine biosynthesis. Catalyzes the base-exchange of a guanine (G) residue with the queuine precursor 7-aminomethyl-7-deazaguanine (PreQ1) at position 34 (anticodon wobble position) in tRNAs with GU(N) anticodons (tRNA-Asp, -Asn, -His and -Tyr). Catalysis occurs through a double-displacement mechanism. The nucleophile active site attacks the C1' of nucleotide 34 to detach the guanine base from the RNA, forming a covalent enzyme-RNA intermediate. The proton acceptor active site deprotonates the incoming PreQ1, allowing a nucleophilic attack on the C1' of the ribose to form the product. After dissociation, two additional enzymatic reactions on the tRNA convert PreQ1 to queuine (Q), resulting in the hypermodified nucleoside queuosine (7-(((4,5-cis-dihydroxy-2-cyclopenten-1-yl)amino)methyl)-7-deazaguanosine). The sequence is that of Queuine tRNA-ribosyltransferase from Chlamydia trachomatis serovar L2 (strain ATCC VR-902B / DSM 19102 / 434/Bu).